Reading from the N-terminus, the 329-residue chain is 4-hydroxythreonine-4-phosphate dehydrogenase (329 aa).

The substrate site is built by His-136 and Thr-137. 3 residues coordinate a divalent metal cation: His-166, His-211, and His-266. Positions 274, 283, and 292 each coordinate substrate.

Belongs to the PdxA family. Homodimer. The cofactor is Zn(2+). Requires Mg(2+) as cofactor. Co(2+) serves as cofactor.

The protein resides in the cytoplasm. The catalysed reaction is 4-(phosphooxy)-L-threonine + NAD(+) = 3-amino-2-oxopropyl phosphate + CO2 + NADH. It functions in the pathway cofactor biosynthesis; pyridoxine 5'-phosphate biosynthesis; pyridoxine 5'-phosphate from D-erythrose 4-phosphate: step 4/5. Functionally, catalyzes the NAD(P)-dependent oxidation of 4-(phosphooxy)-L-threonine (HTP) into 2-amino-3-oxo-4-(phosphooxy)butyric acid which spontaneously decarboxylates to form 3-amino-2-oxopropyl phosphate (AHAP). The protein is 4-hydroxythreonine-4-phosphate dehydrogenase of Shigella dysenteriae serotype 1 (strain Sd197).